Here is a 414-residue protein sequence, read N- to C-terminus: Serine hydroxymethyltransferase (414 aa).

Residues Leu-121 and 125–127 (GHL) contribute to the (6S)-5,6,7,8-tetrahydrofolate site. Lys-229 bears the N6-(pyridoxal phosphate)lysine mark.

Belongs to the SHMT family. In terms of assembly, homodimer. Requires pyridoxal 5'-phosphate as cofactor.

It is found in the cytoplasm. It carries out the reaction (6R)-5,10-methylene-5,6,7,8-tetrahydrofolate + glycine + H2O = (6S)-5,6,7,8-tetrahydrofolate + L-serine. The protein operates within one-carbon metabolism; tetrahydrofolate interconversion. It functions in the pathway amino-acid biosynthesis; glycine biosynthesis; glycine from L-serine: step 1/1. Catalyzes the reversible interconversion of serine and glycine with tetrahydrofolate (THF) serving as the one-carbon carrier. This reaction serves as the major source of one-carbon groups required for the biosynthesis of purines, thymidylate, methionine, and other important biomolecules. Also exhibits THF-independent aldolase activity toward beta-hydroxyamino acids, producing glycine and aldehydes, via a retro-aldol mechanism. The protein is Serine hydroxymethyltransferase of Janthinobacterium sp. (strain Marseille) (Minibacterium massiliensis).